Here is a 471-residue protein sequence, read N- to C-terminus: Glutamate--tRNA ligase (471 aa).

The 'HIGH' region motif lies at 9–19 (PSPTGYLHVGG). 4 residues coordinate Zn(2+): Cys-98, Cys-100, Cys-125, and His-127. Residues 237-241 (KLSKR) carry the 'KMSKS' region motif. ATP is bound at residue Lys-240.

The protein belongs to the class-I aminoacyl-tRNA synthetase family. Glutamate--tRNA ligase type 1 subfamily. Monomer. It depends on Zn(2+) as a cofactor.

It localises to the cytoplasm. The enzyme catalyses tRNA(Glu) + L-glutamate + ATP = L-glutamyl-tRNA(Glu) + AMP + diphosphate. In terms of biological role, catalyzes the attachment of glutamate to tRNA(Glu) in a two-step reaction: glutamate is first activated by ATP to form Glu-AMP and then transferred to the acceptor end of tRNA(Glu). The sequence is that of Glutamate--tRNA ligase from Shigella boydii serotype 18 (strain CDC 3083-94 / BS512).